Consider the following 144-residue polypeptide: MGFTEKQEALVNSSSQLFKQNPSNYSVLFYTIILQKAPTAKAMFSFLKDSAGVVDSPKLGAHAEKVFGMVRDSAVQLRATGEVVLDGKDGSIHIQKGVLDPHFVVVKEALLKTIKEASGDKWSEELSAAWEVAYDGLATAIKAA.

The Globin domain maps to 2–144 (GFTEKQEALV…DGLATAIKAA (143 aa)). 2 positions are modified to nitrated tyrosine: Tyr25 and Tyr30. Ser45 provides a ligand contact to heme b. Ser45 is subject to Phosphoserine. O2 is bound at residue His62. Heme b contacts are provided by Lys65, His93, and Lys96. Tyr134 carries the post-translational modification Nitrated tyrosine.

This sequence belongs to the plant globin family. As to quaternary structure, monomer. Nitrated in effective nodules and particularly in hypoxic conditions; this mechanism may play a protective role in the symbiosis by buffering toxic peroxynitrite NO(2)(-). Nitration level decrease during nodule senescence. Post-translationally, phosphorylation at Ser-45 disrupts the molecular environment of its porphyrin ring oxygen binding pocket, thus leading to a reduced oxygen consumption and to the delivery of oxygen O(2) to symbiosomes. In terms of tissue distribution, root nodules.

The protein localises to the cytoplasm. It localises to the cytosol. It is found in the nucleus. Leghemoglobin that reversibly binds oxygen O(2) through a pentacoordinated heme iron. In root nodules, facilitates the diffusion of oxygen to the bacteroids while preventing the bacterial nitrogenase from being inactivated by buffering dioxygen, nitric oxide and carbon monoxide, and promoting the formation of reactive oxygen species (ROS, e.g. H(2)O(2)). This role is essential for symbiotic nitrogen fixation (SNF). In Vicia faba (Broad bean), this protein is Leghemoglobin-1.